Consider the following 218-residue polypeptide: Large ribosomal subunit protein uL3 (218 aa).

The interval 134–154 is disordered; that stretch reads GRASHGNSRSHNVPGSIGMAQ. The residue at position 154 (Gln154) is an N5-methylglutamine.

Belongs to the universal ribosomal protein uL3 family. As to quaternary structure, part of the 50S ribosomal subunit. Forms a cluster with proteins L14 and L19. Post-translationally, methylated by PrmB.

One of the primary rRNA binding proteins, it binds directly near the 3'-end of the 23S rRNA, where it nucleates assembly of the 50S subunit. This chain is Large ribosomal subunit protein uL3, found in Polynucleobacter necessarius subsp. necessarius (strain STIR1).